The sequence spans 354 residues: Probable L-ascorbate-6-phosphate lactonase UlaG (354 aa).

The protein belongs to the UlaG family. The cofactor is a divalent metal cation.

It is found in the cytoplasm. The catalysed reaction is L-ascorbate 6-phosphate + H2O = 3-dehydro-L-gulonate 6-phosphate. It participates in cofactor degradation; L-ascorbate degradation; D-xylulose 5-phosphate from L-ascorbate: step 1/4. Probably catalyzes the hydrolysis of L-ascorbate-6-P into 3-keto-L-gulonate-6-P. Is essential for L-ascorbate utilization under anaerobic conditions. The chain is Probable L-ascorbate-6-phosphate lactonase UlaG from Shigella boydii serotype 4 (strain Sb227).